Reading from the N-terminus, the 588-residue chain is Phenol 2-monooxygenase fsqG (588 aa).

FAD contacts are provided by residues 9 to 38, 17 to 18, 37 to 39, 45 to 50, Y232, 289 to 299, D299, and 309 to 313; these read DVLI…LIDW, PA, DWK, TGRADG, ARHNRIFLAGD, and GQGMN. Substrate contacts are provided by D49 and Y232.

The protein belongs to the PheA/TfdB FAD monooxygenase family. Homodimer. It depends on FAD as a cofactor.

It functions in the pathway secondary metabolite biosynthesis. Phenol 2-monooxygenase; part of the gene cluster that mediates the biosynthesis of the isoquinoline alkaloids fumisoquin A, fumisoquin B and fumisoquin C; as well as small amounts of fumipyrrole as a shunt metabolite. The products of the cluster lead to a brown coloration and are important for growth and conidiation. The nonribosomal peptide synthetase-like protein fsqF, which lacks a canonical condensation domain, is required for addition of a serine-derived dehydroalanine moiety to activated tyrosine but is not essential for the subsequent steps leading to isoquinoline formation. A different enzyme, most likely the ATP-grasp enzyme fsqD, is responsible for activation of tyrosine. Three additional enzymes encoded by the fsq cluster, the N-methyltransferase fsqC, the phenol 2-monooxygenase fsqG and the FAD-dependent oxidase fsqB, catalyze the formation of the isoquinoline ring system in the fumisoquins. FsqB converts the fspF thiolation domain-bound (2S,4S,5S)-2-amino-6-(3,4-dihydroxyphenyl)-4-hydroxy-5-(methylamino)hexanoyl into isoquinoline. The cyclization most likely proceeds via a two-step mechanism, beginning with FAD-dependent oxidation of the methyl group to an iminium species followed by electrophilic attack on the deprotonated phenol. The protein is Phenol 2-monooxygenase fsqG of Aspergillus fumigatus (strain ATCC MYA-4609 / CBS 101355 / FGSC A1100 / Af293) (Neosartorya fumigata).